The chain runs to 104 residues: Integration host factor subunit alpha (104 aa).

Belongs to the bacterial histone-like protein family. Heterodimer of an alpha and a beta chain.

Functionally, this protein is one of the two subunits of integration host factor, a specific DNA-binding protein that functions in genetic recombination as well as in transcriptional and translational control. The polypeptide is Integration host factor subunit alpha (Methylobacterium sp. (strain 4-46)).